A 131-amino-acid polypeptide reads, in one-letter code: C-type natriuretic peptide (131 aa).

The N-terminal stretch at 1-20 is a signal peptide; it reads MMCKALVFAVLLLAVPLERA. Positions 21 to 109 are excised as a propeptide; the sequence is DSRALRTPVD…KRALPDRAKR (89 aa). The cysteines at positions 115 and 131 are disulfide-linked.

The protein belongs to the natriuretic peptide family. In terms of tissue distribution, highly expressed in brain and liver, and moderately in gut, gills and heart. Expressed to a low level in atrium, ventricle and liver of fresh water eels.

It is found in the secreted. Its function is as follows. Hormone which plays a role in endochondral ossification through regulation of cartilaginous growth plate chondrocytes proliferation and differentiation. May also be vasoactive and natriuretic. May be important for freshwater adaptation. The chain is C-type natriuretic peptide (cnp) from Anguilla japonica (Japanese eel).